We begin with the raw amino-acid sequence, 305 residues long: Probable 5-dehydro-4-deoxyglucarate dehydratase (305 aa).

Belongs to the DapA family.

The catalysed reaction is 5-dehydro-4-deoxy-D-glucarate + H(+) = 2,5-dioxopentanoate + CO2 + H2O. It functions in the pathway carbohydrate acid metabolism; D-glucarate degradation; 2,5-dioxopentanoate from D-glucarate: step 2/2. This is Probable 5-dehydro-4-deoxyglucarate dehydratase from Xanthomonas campestris pv. campestris (strain B100).